The sequence spans 133 residues: Cytochrome c-type biogenesis protein CcmE (133 aa).

At 1 to 7 (MKRKHKR) the chain is on the cytoplasmic side. A helical; Signal-anchor for type II membrane protein transmembrane segment spans residues 8 to 28 (LLFIIVTFIIFGSSVVIVLNK). At 29-133 (LRSNISFFFT…NYKPGKYRAK (105 aa)) the chain is on the periplasmic side. Heme is bound by residues H121 and Y125.

It belongs to the CcmE/CycJ family.

The protein resides in the cell inner membrane. Its function is as follows. Heme chaperone required for the biogenesis of c-type cytochromes. Transiently binds heme delivered by CcmC and transfers the heme to apo-cytochromes in a process facilitated by CcmF and CcmH. The chain is Cytochrome c-type biogenesis protein CcmE from Ehrlichia canis (strain Jake).